Here is a 521-residue protein sequence, read N- to C-terminus: C-22 sterol desaturase erg5 (521 aa).

Residues 30 to 50 traverse the membrane as a helical segment; sequence AVLNGFTFWKALATLFFAAVI.

It belongs to the cytochrome P450 family. It depends on heme as a cofactor.

Its subcellular location is the endoplasmic reticulum membrane. The catalysed reaction is 5-dehydroepisterol + NADPH + O2 + H(+) = ergosta-5,7,22,24(28)-tetraen-3beta-ol + NADP(+) + 2 H2O. It functions in the pathway steroid metabolism; ergosterol biosynthesis. Functionally, C-22 sterol desaturase; part of the third module of ergosterol biosynthesis pathway that includes the late steps of the pathway. Erg5 converts 5-dehydroepisterol into ergosta-5,7,22,24(28)-tetraen-3beta-ol by forming the C-22(23) double bond in the sterol side chain. The third module or late pathway involves the ergosterol synthesis itself through consecutive reactions that mainly occur in the endoplasmic reticulum (ER) membrane. Firstly, the squalene synthase erg9 catalyzes the condensation of 2 farnesyl pyrophosphate moieties to form squalene, which is the precursor of all steroids. Squalene synthase is crucial for balancing the incorporation of farnesyl diphosphate (FPP) into sterol and nonsterol isoprene synthesis. Secondly, squalene is converted into lanosterol by the consecutive action of the squalene epoxidase erg1 and the lanosterol synthase erg7. Then, the delta(24)-sterol C-methyltransferase erg6 methylates lanosterol at C-24 to produce eburicol. Eburicol is the substrate of the sterol 14-alpha demethylase encoded by cyp51A and cyp51B, to yield 4,4,24-trimethyl ergosta-8,14,24(28)-trienol. The C-14 reductase erg24 then reduces the C14=C15 double bond which leads to 4,4-dimethylfecosterol. A sequence of further demethylations at C-4, involving the C-4 demethylation complex containing the C-4 methylsterol oxidases erg25A or erg25B, the sterol-4-alpha-carboxylate 3-dehydrogenase erg26 and the 3-keto-steroid reductase erg27, leads to the production of fecosterol via 4-methylfecosterol. The C-8 sterol isomerase erg2 then catalyzes the reaction which results in unsaturation at C-7 in the B ring of sterols and thus converts fecosterol to episterol. The sterol-C5-desaturase erg3B then catalyzes the introduction of a C-5 double bond in the B ring to produce 5-dehydroepisterol. The 2 other sterol-C5-desaturases, erg3A and erg3C, seem to be less important in ergosterol biosynthesis. The C-22 sterol desaturase erg5 further converts 5-dehydroepisterol into ergosta-5,7,22,24(28)-tetraen-3beta-ol by forming the C-22(23) double bond in the sterol side chain. Finally, ergosta-5,7,22,24(28)-tetraen-3beta-ol is substrate of the C-24(28) sterol reductases erg4A and erg4B to produce ergosterol. Possible alternative sterol biosynthetic pathways might exist from fecosterol to ergosterol, depending on the activities of the erg3 isoforms. In Aspergillus fumigatus (strain ATCC MYA-4609 / CBS 101355 / FGSC A1100 / Af293) (Neosartorya fumigata), this protein is C-22 sterol desaturase erg5.